The primary structure comprises 359 residues: Ribosomal RNA small subunit methyltransferase H (359 aa).

Residues alanine 39–histidine 41, aspartate 58, phenylalanine 87, aspartate 108, and glutamine 115 contribute to the S-adenosyl-L-methionine site. Residues isoleucine 339–glycine 359 are disordered. The segment covering asparagine 350–glycine 359 has biased composition (basic residues).

Belongs to the methyltransferase superfamily. RsmH family.

It is found in the cytoplasm. It carries out the reaction cytidine(1402) in 16S rRNA + S-adenosyl-L-methionine = N(4)-methylcytidine(1402) in 16S rRNA + S-adenosyl-L-homocysteine + H(+). In terms of biological role, specifically methylates the N4 position of cytidine in position 1402 (C1402) of 16S rRNA. The chain is Ribosomal RNA small subunit methyltransferase H from Bifidobacterium longum (strain DJO10A).